We begin with the raw amino-acid sequence, 180 residues long: NAD(P)H-quinone oxidoreductase subunit I, chloroplastic (180 aa).

4Fe-4S ferredoxin-type domains lie at 55-84 and 95-124; these read GRIH…VDWK and LNYS…MTEE. [4Fe-4S] cluster is bound by residues Cys-64, Cys-67, Cys-70, Cys-74, Cys-104, Cys-107, Cys-110, and Cys-114.

This sequence belongs to the complex I 23 kDa subunit family. In terms of assembly, NDH is composed of at least 16 different subunits, 5 of which are encoded in the nucleus. It depends on [4Fe-4S] cluster as a cofactor.

It localises to the plastid. The protein localises to the chloroplast thylakoid membrane. The catalysed reaction is a plastoquinone + NADH + (n+1) H(+)(in) = a plastoquinol + NAD(+) + n H(+)(out). It carries out the reaction a plastoquinone + NADPH + (n+1) H(+)(in) = a plastoquinol + NADP(+) + n H(+)(out). In terms of biological role, NDH shuttles electrons from NAD(P)H:plastoquinone, via FMN and iron-sulfur (Fe-S) centers, to quinones in the photosynthetic chain and possibly in a chloroplast respiratory chain. The immediate electron acceptor for the enzyme in this species is believed to be plastoquinone. Couples the redox reaction to proton translocation, and thus conserves the redox energy in a proton gradient. This is NAD(P)H-quinone oxidoreductase subunit I, chloroplastic from Nandina domestica (Heavenly bamboo).